The following is a 32-amino-acid chain: Growth hormone-related protein 4 (32 aa).

C4 and C11 form a disulfide bridge.

This sequence belongs to the somatotropin/prolactin family. Glycosylated. As to expression, placental basal zone cells.

Its subcellular location is the secreted. This Rattus norvegicus (Rat) protein is Growth hormone-related protein 4.